Reading from the N-terminus, the 292-residue chain is Recombination-promoting nuclease RpnA (292 aa).

This sequence belongs to the Rpn/YhgA-like nuclease family. Mg(2+) serves as cofactor.

With respect to regulation, inhibited by EDTA, Zn(2+) and by Mg(2+) plus Mn(2+); stimulated by Ca(2+) in the presence of Mg(2+). Functionally, a low activity DNA endonuclease yielding 3'-hydroxyl ends, equally active on ss or dsDNA, not active on dsRNA. Shows no sequence specificity. Upon expression enhances RecA-independent DNA recombination 49-fold, concomitantly reducing viability by 88% and probably inducing DNA damage as measured by induction of the SOS repair response in RecA cells. RecA-independent DNA recombination leads to replacement of recipient genes with large segments of donor DNA rather than DNA addition to the donor strain; increased expression of RpnA leads to smaller replacement segments, suggesting this protein may play a role in generating crossover events. This chain is Recombination-promoting nuclease RpnA, found in Escherichia coli (strain K12).